A 288-amino-acid chain; its full sequence is L-threonine kinase (288 aa).

P80–A90 serves as a coordination point for ATP.

Belongs to the GHMP kinase family. PduX subfamily.

Its subcellular location is the cytoplasm. It catalyses the reaction L-threonine + ATP = O-phospho-L-threonine + ADP + H(+). Its pathway is cofactor biosynthesis; adenosylcobalamin biosynthesis. It participates in polyol metabolism; 1,2-propanediol degradation. Functionally, L-threonine kinase that catalyzes the conversion of L-threonine to L-threonine-O-3-phosphate. Involved in the de novo synthesis of adenosylcobalamin (coenzyme B12) and the assimilation of cobyric acid. Its function is as follows. Expression of a cosmid containing the full 21-gene pdu operon in E.coli allows E.coli to grow on 1,2-propanediol (1,2-PD) with the appearance of bacterial microcompartments (BMC) in its cytoplasm. In terms of biological role, the 1,2-PD-specific bacterial microcompartment (BMC) concentrates low levels of 1,2-PD catabolic enzymes, concentrates volatile reaction intermediates thus enhancing pathway flux and keeps the level of toxic, mutagenic propionaldehyde low. This gene probably benefits from its induction via the Pdu promoter, rather than a physical interaction with the BMC. The polypeptide is L-threonine kinase (Citrobacter freundii).